Reading from the N-terminus, the 328-residue chain is Phenylalanine--tRNA ligase alpha subunit (328 aa).

Glu245 is a binding site for Mg(2+).

It belongs to the class-II aminoacyl-tRNA synthetase family. Phe-tRNA synthetase alpha subunit type 1 subfamily. As to quaternary structure, tetramer of two alpha and two beta subunits. Mg(2+) is required as a cofactor.

It localises to the cytoplasm. The catalysed reaction is tRNA(Phe) + L-phenylalanine + ATP = L-phenylalanyl-tRNA(Phe) + AMP + diphosphate + H(+). The protein is Phenylalanine--tRNA ligase alpha subunit of Helicobacter acinonychis (strain Sheeba).